The primary structure comprises 457 residues: UDP-glycosyltransferase 72C1 (457 aa).

Residues Ser272, 343 to 344, 361 to 369, and 383 to 386 each bind UDP-alpha-D-glucose; these read WA, HCGWNSVLE, and YSEQ.

Belongs to the UDP-glycosyltransferase family.

This Arabidopsis thaliana (Mouse-ear cress) protein is UDP-glycosyltransferase 72C1 (UGT72C1).